We begin with the raw amino-acid sequence, 190 residues long: MARLCAFLMILIVMSYWSTCSLGCDLPHTYNLRNKRALKVLAQMRRLTPLSCLKDRKDFGFPLEKVDAQQIQKAQSIPVLRDLTQQILNLFASKDSSAAWNATLLDSFCNDLHQQLNDLQGCLMQQVGVQESPLTQEDSLLAVRIYFHRITVFLREKKHSPCAWEVVRAEVWRALSSSANVLGRLREEKA.

The signal sequence occupies residues 1–23 (MARLCAFLMILIVMSYWSTCSLG). Cystine bridges form between cysteine 24/cysteine 122 and cysteine 52/cysteine 162. Asparagine 101 is a glycosylation site (N-linked (GlcNAc...) asparagine).

This sequence belongs to the alpha/beta interferon family. Post-translationally, N-glycosylated.

The protein localises to the secreted. Its function is as follows. Has antiviral and antiproliferative activities. Produced by macrophages and stimulates the production of two enzymes: a protein kinase and an oligoadenylate synthetase. During viral infection, mediates antiviral effect, either directly by inducing interferon-stimulated genes, either indirectly through stimulation of natural killer cells enabling them to control viral replication. This is Interferon alpha-11 (Ifna11) from Mus musculus (Mouse).